The chain runs to 856 residues: Facilitated trehalose transporter Tret1 (856 aa).

2 disordered regions span residues 1 to 27 (MSGR…GKLK) and 62 to 202 (DPFL…KATS). At 1–389 (MSGRDNRGAG…LEVYRPTTNP (389 aa)) the chain is on the cytoplasmic side. Residues 69–80 (VSPQRHPQTVRT) are compositionally biased toward polar residues. Residues 133-142 (EIREHRDRQQ) are compositionally biased toward basic and acidic residues. Residues 170–180 (GNSNTNNNKAA) are compositionally biased toward polar residues. Phosphoserine occurs at positions 247, 248, 249, 319, and 321. The interval 326–345 (LTSRQHFQQQRSISTDSRKS) is disordered. Residues 329–340 (RQHFQQQRSIST) show a composition bias toward polar residues. A helical transmembrane segment spans residues 390–410 (IFIWTQVLAALSVSLGSLVVG). Over 411 to 439 (FVSAYTSPALVSMTDRNITSFEVTQDAGS) the chain is Extracellular. Residue Asn-427 is glycosylated (N-linked (GlcNAc...) asparagine). A helical membrane pass occupies residues 440–460 (WVGGIMPLAGLAGGIAGGPLI). Over 461–472 (EYLGRRNTILAT) the chain is Cytoplasmic. A helical transmembrane segment spans residues 473–493 (AVPFIVSSLLIACAVNVAMVL). Residues 494–496 (CGR) lie on the Extracellular side of the membrane. A helical transmembrane segment spans residues 497 to 517 (FLAGFCVGIASLSLPVYLGET). Topologically, residues 518 to 527 (VQPEVRGTLG) are cytoplasmic. The helical transmembrane segment at 528-548 (LLPTAFGNIGILLCFVAGSFM) threads the bilayer. Asn-549 carries N-linked (GlcNAc...) asparagine glycosylation. At 549 to 551 (NWS) the chain is on the extracellular side. The chain crosses the membrane as a helical span at residues 552 to 572 (MLAFLGAALPVPFLILMFLIP). The Cytoplasmic portion of the chain corresponds to 573-635 (ETPRWFVSRG…ELLKRNNLKP (63 aa)). The helical transmembrane segment at 636-656 (LSISLGLMFFQQLSGINAVIF) threads the bilayer. At 657 to 672 (YTVQIFKDAGSTIDGN) the chain is on the extracellular side. A helical transmembrane segment spans residues 673 to 693 (ICTIIVGVVNFLATFIGIVLI). At 694 to 699 (DRAGRK) the chain is on the cytoplasmic side. Residues 700–720 (ILLYVSNIAMILTLFVLGGFF) form a helical membrane-spanning segment. At 721-739 (YCKAHGPDVSNLGWLPLTC) the chain is on the extracellular side. Residues 740 to 760 (FVIYILGFSLGFGPIPWLMMG) traverse the membrane as a helical segment. At 761–766 (EILPAK) the chain is on the cytoplasmic side. The chain crosses the membrane as a helical span at residues 767–787 (IRGSAASVATAFNWSCTFVVT). Residues 788–800 (KTFQDLTVAMGAH) lie on the Extracellular side of the membrane. Residues 801–821 (GAFWLFGAICFVGLFFVIIYV) traverse the membrane as a helical segment. Residues 822–856 (PETQGKTLEDIERKMMGRVRRMSSVANIKPLSFNM) lie on the Cytoplasmic side of the membrane. Phosphoserine is present on residues Ser-844 and Ser-845.

This sequence belongs to the major facilitator superfamily. Sugar transporter (TC 2.A.1.1) family. Trehalose transporter subfamily.

It localises to the cell membrane. Its function is as follows. Low-capacity facilitative transporter for trehalose. Does not transport maltose, sucrose or lactose. Mediates the bidirectional transfer of trehalose. Responsible for the transport of trehalose synthesized in the fat body and the incorporation of trehalose into other tissues that require a carbon source, thereby regulating trehalose levels in the hemolymph. The protein is Facilitated trehalose transporter Tret1 of Drosophila erecta (Fruit fly).